Consider the following 428-residue polypeptide: Serine--tRNA ligase (428 aa).

T237–E239 is a binding site for L-serine. R268–E270 serves as a coordination point for ATP. E291 is a binding site for L-serine. E355 to S358 is a binding site for ATP. S390 is an L-serine binding site.

It belongs to the class-II aminoacyl-tRNA synthetase family. Type-1 seryl-tRNA synthetase subfamily. Homodimer. The tRNA molecule binds across the dimer.

The protein resides in the cytoplasm. It carries out the reaction tRNA(Ser) + L-serine + ATP = L-seryl-tRNA(Ser) + AMP + diphosphate + H(+). The enzyme catalyses tRNA(Sec) + L-serine + ATP = L-seryl-tRNA(Sec) + AMP + diphosphate + H(+). The protein operates within aminoacyl-tRNA biosynthesis; selenocysteinyl-tRNA(Sec) biosynthesis; L-seryl-tRNA(Sec) from L-serine and tRNA(Sec): step 1/1. Catalyzes the attachment of serine to tRNA(Ser). Is also able to aminoacylate tRNA(Sec) with serine, to form the misacylated tRNA L-seryl-tRNA(Sec), which will be further converted into selenocysteinyl-tRNA(Sec). The protein is Serine--tRNA ligase of Hydrogenovibrio crunogenus (strain DSM 25203 / XCL-2) (Thiomicrospira crunogena).